Consider the following 731-residue polypeptide: Lanosterol synthase ERG7 (731 aa).

Threonine 2 is subject to N-acetylthreonine. Residues 125-167 (RIELIRYIVNTAHPVDGGWGLHSVDKSTVFGTVLNYVILRLLG) form a PFTB 1 repeat. The active-site Proton donor is aspartate 456. Residues 615 to 661 (VRKGCDFLVSKQMKDGGWGESMKSSELHSYVDSEKSLVVQTAWALIA) form a PFTB 2 repeat.

This sequence belongs to the terpene cyclase/mutase family.

Its subcellular location is the lipid droplet. It is found in the endoplasmic reticulum membrane. The catalysed reaction is (S)-2,3-epoxysqualene = lanosterol. The protein operates within terpene metabolism; lanosterol biosynthesis; lanosterol from farnesyl diphosphate: step 3/3. Its activity is regulated as follows. Catalytic activity requires the presence of ERG27. Functionally, lanosterol synthase; part of the third module of ergosterol biosynthesis pathway that includes the late steps of the pathway. ERG7 catalyzes the cyclization of (S)-2,3 oxidosqualene to lanosterol, a reaction that forms the sterol core. The third module or late pathway involves the ergosterol synthesis itself through consecutive reactions that mainly occur in the endoplasmic reticulum (ER) membrane. Firstly, the squalene synthase ERG9 catalyzes the condensation of 2 farnesyl pyrophosphate moieties to form squalene, which is the precursor of all steroids. Squalene synthase is crucial for balancing the incorporation of farnesyl diphosphate (FPP) into sterol and nonsterol isoprene synthesis. Secondly, the squalene epoxidase ERG1 catalyzes the stereospecific oxidation of squalene to (S)-2,3-epoxysqualene, which is considered to be a rate-limiting enzyme in steroid biosynthesis. Then, the lanosterol synthase ERG7 catalyzes the cyclization of (S)-2,3 oxidosqualene to lanosterol, a reaction that forms the sterol core. In the next steps, lanosterol is transformed to zymosterol through a complex process involving various demethylation, reduction and desaturation reactions. The lanosterol 14-alpha-demethylase ERG11 (also known as CYP51) catalyzes C14-demethylation of lanosterol to produce 4,4'-dimethyl cholesta-8,14,24-triene-3-beta-ol, which is critical for ergosterol biosynthesis. The C-14 reductase ERG24 reduces the C14=C15 double bond of 4,4-dimethyl-cholesta-8,14,24-trienol to produce 4,4-dimethyl-cholesta-8,24-dienol. 4,4-dimethyl-cholesta-8,24-dienol is substrate of the C-4 demethylation complex ERG25-ERG26-ERG27 in which ERG25 catalyzes the three-step monooxygenation required for the demethylation of 4,4-dimethyl and 4alpha-methylsterols, ERG26 catalyzes the oxidative decarboxylation that results in a reduction of the 3-beta-hydroxy group at the C-3 carbon to an oxo group, and ERG27 is responsible for the reduction of the keto group on the C-3. ERG28 has a role as a scaffold to help anchor ERG25, ERG26 and ERG27 to the endoplasmic reticulum and ERG29 regulates the activity of the iron-containing C4-methylsterol oxidase ERG25. Then, the sterol 24-C-methyltransferase ERG6 catalyzes the methyl transfer from S-adenosyl-methionine to the C-24 of zymosterol to form fecosterol. The C-8 sterol isomerase ERG2 catalyzes the reaction which results in unsaturation at C-7 in the B ring of sterols and thus converts fecosterol to episterol. The sterol-C5-desaturase ERG3 then catalyzes the introduction of a C-5 double bond in the B ring to produce 5-dehydroepisterol. The C-22 sterol desaturase ERG5 further converts 5-dehydroepisterol into ergosta-5,7,22,24(28)-tetraen-3beta-ol by forming the C-22(23) double bond in the sterol side chain. Finally, ergosta-5,7,22,24(28)-tetraen-3beta-ol is substrate of the C-24(28) sterol reductase ERG4 to produce ergosterol. The sequence is that of Lanosterol synthase ERG7 from Saccharomyces cerevisiae (strain ATCC 204508 / S288c) (Baker's yeast).